Here is a 354-residue protein sequence, read N- to C-terminus: L-Lys-D/L-Arg epimerase (354 aa).

Residues Thr135 and 160–162 (KIK) contribute to the substrate site. Residues Asp190, Glu215, and Asp240 each contribute to the Mg(2+) site. Substrate-binding positions include Lys265, Asp295, and 318 to 320 (DLD).

It belongs to the mandelate racemase/muconate lactonizing enzyme family. The cofactor is Mg(2+).

In terms of biological role, catalyzes the epimerization of L-Lys-L-Arg to L-Lys-D-Arg (in vitro). Catalyzes the epimerization of positively charged dipeptides, with a preference for substrates with a basic amino acid in the second position. Has epimerase activity with L-Lys-L-Lys, L-Arg-L-Arg, L-Val-L-Arg, L-Val-L-Lys and L-Ala-L-Arg (in vitro). The chain is L-Lys-D/L-Arg epimerase from Desulforapulum autotrophicum (strain ATCC 43914 / DSM 3382 / VKM B-1955 / HRM2) (Desulfobacterium autotrophicum).